Here is a 334-residue protein sequence, read N- to C-terminus: Glutamyl-tRNA reductase (334 aa).

Residues T49–R52, S107, E112–Q114, and Q118 contribute to the substrate site. Catalysis depends on C50, which acts as the Nucleophile. An NADP(+)-binding site is contributed by G186–G191.

This sequence belongs to the glutamyl-tRNA reductase family. As to quaternary structure, homodimer.

It carries out the reaction (S)-4-amino-5-oxopentanoate + tRNA(Glu) + NADP(+) = L-glutamyl-tRNA(Glu) + NADPH + H(+). Its pathway is porphyrin-containing compound metabolism; protoporphyrin-IX biosynthesis; 5-aminolevulinate from L-glutamyl-tRNA(Glu): step 1/2. Functionally, catalyzes the NADPH-dependent reduction of glutamyl-tRNA(Glu) to glutamate 1-semialdehyde (GSA). This Alkaliphilus oremlandii (strain OhILAs) (Clostridium oremlandii (strain OhILAs)) protein is Glutamyl-tRNA reductase.